The sequence spans 248 residues: UPF0736 protein BCE_1296 (248 aa).

The protein belongs to the UPF0736 family.

The chain is UPF0736 protein BCE_1296 from Bacillus cereus (strain ATCC 10987 / NRS 248).